A 764-amino-acid polypeptide reads, in one-letter code: Protein Lines homolog 1 (764 aa).

Disordered regions lie at residues 615–668 (SQSQ…TSLC) and 682–702 (WEEQ…SSPF). The span at 645–654 (DSSEASEEET) shows a compositional bias: acidic residues. Position 650 is a phosphoserine (S650). A compositionally biased stretch (polar residues) spans 658–668 (HLANSKQTSLC). Residues 691-702 (EPLLSAESSSPF) show a composition bias toward low complexity.

It belongs to the protein lines family.

This is Protein Lines homolog 1 from Mus musculus (Mouse).